The following is a 341-amino-acid chain: MEQMEVDVDMSAKPSTSSSAAAGSSMAVDKTADQNPQPQGNIMAAAGTSGSVTISLHPLVIMNISEHWTRFRAQHGEPRQVYGALIGKQKGRNIEIMNSFELKTDVIGDETVINKDYYNKKEQQYKQVFSDLDFIGWYTTGDNPTADDIKIQRQIAAINECPIMLQLNPLSRSVDHLPLKLFESLIDLVDGEATMLFVPLTYTLATEEAERIGVDHVARMTSNESGEKSVVAEHLVAQDSAIKMLNTRIKIVLQYIRDVEAGKLRANQEILREAYALCHRLPVMQVPAFQEEFYTQCNDVGLISYLGTLTKGCNDMHHFVNKFNMLYDRQGSARRMRGLYY.

The segment at 1–43 (MEQMEVDVDMSAKPSTSSSAAAGSSMAVDKTADQNPQPQGNIM) is disordered. Low complexity predominate over residues 11–27 (SAKPSTSSSAAAGSSMA). Residues 54-188 (ISLHPLVIMN…LKLFESLIDL (135 aa)) enclose the MPN domain.

It belongs to the peptidase M67A family. CSN6 subfamily. As to quaternary structure, component of the CSN complex, probably composed of CSN1b, alien/CSN2, CSN3, CSN4, CSN5, CSN6, CSN7 and CSN8.

The protein localises to the cytoplasm. Its subcellular location is the nucleus. Component of the COP9 signalosome complex (CSN), a complex involved in various cellular and developmental processes. The CSN complex is an essential regulator of the ubiquitin (Ubl) conjugation pathway by mediating the deneddylation of the cullin subunits of the SCF-type E3 ligase complexes, leading to decrease the Ubl ligase activity of SCF. The CSN complex plays an essential role in oogenesis and embryogenesis and is required for proper photoreceptor R cell differentiation and promote lamina glial cell migration or axon targeting. It also promotes Ubl-dependent degradation of cyclin E (CycE) during early oogenesis. The protein is COP9 signalosome complex subunit 6 (CSN6) of Drosophila melanogaster (Fruit fly).